A 103-amino-acid polypeptide reads, in one-letter code: Large ribosomal subunit protein eL14 (103 aa).

The protein belongs to the eukaryotic ribosomal protein eL14 family.

This chain is Large ribosomal subunit protein eL14, found in Pyrobaculum neutrophilum (strain DSM 2338 / JCM 9278 / NBRC 100436 / V24Sta) (Thermoproteus neutrophilus).